The following is a 181-amino-acid chain: ADP-ribosylation factor 3 (181 aa).

The N-myristoyl glycine moiety is linked to residue G2. Residues G24–T31, D67–Q71, and N126–D129 each bind GTP.

It belongs to the small GTPase superfamily. Arf family. In terms of assembly, interacts with PRKCABP. Interacts with PI4KB and NCS1/FREQ at the Golgi complex.

It is found in the golgi apparatus. The protein localises to the cytoplasm. Its subcellular location is the perinuclear region. GTP-binding protein that functions as an allosteric activator of the cholera toxin catalytic subunit, an ADP-ribosyltransferase. Involved in protein trafficking; may modulate vesicle budding and uncoating within the Golgi apparatus. The sequence is that of ADP-ribosylation factor 3 (ARF3) from Bos taurus (Bovine).